The chain runs to 89 residues: Small ribosomal subunit protein uS15 (89 aa).

Belongs to the universal ribosomal protein uS15 family. In terms of assembly, part of the 30S ribosomal subunit. Forms a bridge to the 50S subunit in the 70S ribosome, contacting the 23S rRNA.

One of the primary rRNA binding proteins, it binds directly to 16S rRNA where it helps nucleate assembly of the platform of the 30S subunit by binding and bridging several RNA helices of the 16S rRNA. In terms of biological role, forms an intersubunit bridge (bridge B4) with the 23S rRNA of the 50S subunit in the ribosome. This is Small ribosomal subunit protein uS15 from Shewanella amazonensis (strain ATCC BAA-1098 / SB2B).